The chain runs to 431 residues: Enolase (431 aa).

Residue Gln-167 participates in (2R)-2-phosphoglycerate binding. The Proton donor role is filled by Glu-209. Mg(2+)-binding residues include Asp-246, Glu-289, and Asp-316. Lys-341, Arg-370, Ser-371, and Lys-392 together coordinate (2R)-2-phosphoglycerate. Catalysis depends on Lys-341, which acts as the Proton acceptor.

The protein belongs to the enolase family. In terms of assembly, component of the RNA degradosome, a multiprotein complex involved in RNA processing and mRNA degradation. The cofactor is Mg(2+).

The protein localises to the cytoplasm. It localises to the secreted. It is found in the cell surface. It carries out the reaction (2R)-2-phosphoglycerate = phosphoenolpyruvate + H2O. Its pathway is carbohydrate degradation; glycolysis; pyruvate from D-glyceraldehyde 3-phosphate: step 4/5. Catalyzes the reversible conversion of 2-phosphoglycerate (2-PG) into phosphoenolpyruvate (PEP). It is essential for the degradation of carbohydrates via glycolysis. This Shewanella sp. (strain ANA-3) protein is Enolase.